We begin with the raw amino-acid sequence, 284 residues long: 2-dehydro-3-deoxyphosphooctonate aldolase (284 aa).

This sequence belongs to the KdsA family.

The protein resides in the cytoplasm. It carries out the reaction D-arabinose 5-phosphate + phosphoenolpyruvate + H2O = 3-deoxy-alpha-D-manno-2-octulosonate-8-phosphate + phosphate. The protein operates within carbohydrate biosynthesis; 3-deoxy-D-manno-octulosonate biosynthesis; 3-deoxy-D-manno-octulosonate from D-ribulose 5-phosphate: step 2/3. It participates in bacterial outer membrane biogenesis; lipopolysaccharide biosynthesis. The protein is 2-dehydro-3-deoxyphosphooctonate aldolase of Haemophilus influenzae (strain 86-028NP).